A 410-amino-acid polypeptide reads, in one-letter code: MPDIGTDLVEVIEILVKIGDQVKKDDSLITVEGQKASIEIPASHTGTIKNIIVHIGEKITTGSLIAILNGIDDNVKSKNDSSSYSFKNSKNTSTNSNLGNVNNNINNRTILVHATPTVRRLARKFDIKLENITGTGRKGRILKEDVISYKNISLFNDIKKSLKKTNVNYYKDNVTCDDFKSIELTRTQIRSSKNLLKSWLTIPHVTQFDESDITELENFRQKYNSDLKDKSKKLTILIFVIKAVSKALEMFPKFNGRLINKDNRIAIVLNEHINIGIVVDTDDGLLVPVINRVNKKNISSISNDLRIISERARSRKLNFSDIKEYGSFTISNLGGIGGTNFTPIIKYPELAILGISRALIKPYWNSHAFIPKLMLPLSLSYDHRAIDGVAAVRFITFVKKMLTDIRFLMI.

Residues 1–69 form the Lipoyl-binding domain; the sequence is MPDIGTDLVE…TTGSLIAILN (69 aa). An N6-lipoyllysine modification is found at Lys35. The segment at 81–100 is disordered; that stretch reads SSSYSFKNSKNTSTNSNLGN. In terms of domain architecture, Peripheral subunit-binding (PSBD) spans 113 to 150; that stretch reads HATPTVRRLARKFDIKLENITGTGRKGRILKEDVISYK. His383 is a catalytic residue.

Belongs to the 2-oxoacid dehydrogenase family. As to quaternary structure, forms a 24-polypeptide structural core with octahedral symmetry. (R)-lipoate serves as cofactor.

It catalyses the reaction N(6)-[(R)-dihydrolipoyl]-L-lysyl-[protein] + acetyl-CoA = N(6)-[(R)-S(8)-acetyldihydrolipoyl]-L-lysyl-[protein] + CoA. Its function is as follows. The pyruvate dehydrogenase complex catalyzes the overall conversion of pyruvate to acetyl-CoA and CO(2). It contains multiple copies of three enzymatic components: pyruvate dehydrogenase (E1), dihydrolipoamide acetyltransferase (E2) and lipoamide dehydrogenase (E3). The sequence is that of Dihydrolipoyllysine-residue acetyltransferase component of pyruvate dehydrogenase complex (aceF) from Buchnera aphidicola subsp. Baizongia pistaciae (strain Bp).